Here is a 200-residue protein sequence, read N- to C-terminus: Transcriptional repressor NrdR (200 aa).

Residues 3-34 (CPRCGKQEIRVLESRSAEGGQSVRRRRECMSC) fold into a zinc finger. Residues 49 to 139 (IMVIKRDGSR…VYRKFQGIKD (91 aa)) enclose the ATP-cone domain. Residues 158–200 (LERPLRNSPPSESESTASPDWVGGIPQLLDQNDTSSNLSEIPK) form a disordered region. Over residues 186–200 (LDQNDTSSNLSEIPK) the composition is skewed to polar residues.

Belongs to the NrdR family. The cofactor is Zn(2+).

Negatively regulates transcription of bacterial ribonucleotide reductase nrd genes and operons by binding to NrdR-boxes. This chain is Transcriptional repressor NrdR, found in Synechococcus sp. (strain JA-3-3Ab) (Cyanobacteria bacterium Yellowstone A-Prime).